The following is a 477-amino-acid chain: Protoporphyrinogen oxidase (477 aa).

Residues 9-14, tryptophan 42, 57-60, valine 257, alanine 449, and 454-456 each bind FAD; these read GGGISG, GPRG, and VAV.

This sequence belongs to the protoporphyrinogen/coproporphyrinogen oxidase family. Protoporphyrinogen oxidase subfamily. As to quaternary structure, monomer. Homodimer. It depends on FAD as a cofactor.

The protein localises to the mitochondrion inner membrane. The enzyme catalyses protoporphyrinogen IX + 3 O2 = protoporphyrin IX + 3 H2O2. Its pathway is porphyrin-containing compound metabolism; protoporphyrin-IX biosynthesis; protoporphyrin-IX from protoporphyrinogen-IX: step 1/1. Its activity is regulated as follows. Inhibited by acifluorfen. In terms of biological role, catalyzes the 6-electron oxidation of protoporphyrinogen-IX to form protoporphyrin-IX. The polypeptide is Protoporphyrinogen oxidase (Ppox) (Mus musculus (Mouse)).